Reading from the N-terminus, the 121-residue chain is Large ribosomal subunit protein eL34A (121 aa).

This sequence belongs to the eukaryotic ribosomal protein eL34 family. Component of the large ribosomal subunit (LSU). Mature yeast ribosomes consist of a small (40S) and a large (60S) subunit. The 40S small subunit contains 1 molecule of ribosomal RNA (18S rRNA) and 33 different proteins (encoded by 57 genes). The large 60S subunit contains 3 rRNA molecules (25S, 5.8S and 5S rRNA) and 46 different proteins (encoded by 81 genes).

Its subcellular location is the cytoplasm. Its function is as follows. Component of the ribosome, a large ribonucleoprotein complex responsible for the synthesis of proteins in the cell. The small ribosomal subunit (SSU) binds messenger RNAs (mRNAs) and translates the encoded message by selecting cognate aminoacyl-transfer RNA (tRNA) molecules. The large subunit (LSU) contains the ribosomal catalytic site termed the peptidyl transferase center (PTC), which catalyzes the formation of peptide bonds, thereby polymerizing the amino acids delivered by tRNAs into a polypeptide chain. The nascent polypeptides leave the ribosome through a tunnel in the LSU and interact with protein factors that function in enzymatic processing, targeting, and the membrane insertion of nascent chains at the exit of the ribosomal tunnel. In Saccharomyces cerevisiae (strain ATCC 204508 / S288c) (Baker's yeast), this protein is Large ribosomal subunit protein eL34A.